The following is a 144-amino-acid chain: Granulocyte-macrophage colony-stimulating factor (144 aa).

The N-terminal stretch at 1 to 17 is a signal peptide; the sequence is MWLQNLLFLNTVVCSIS. Ser22 and Ser24 each carry an O-linked (GalNAc...) serine glycan. O-linked (GalNAc...) threonine glycosylation occurs at Thr27. N-linked (GlcNAc...) asparagine glycosylation is found at Asn44, Asn45, and Asn54. Intrachain disulfides connect Cys71/Cys113 and Cys105/Cys138.

Belongs to the GM-CSF family. Monomer. The signaling GM-CSF receptor complex is a dodecamer of two head-to-head hexamers of two alpha, two beta, and two ligand subunits.

It localises to the secreted. Functionally, cytokine that stimulates the growth and differentiation of hematopoietic precursor cells from various lineages, including granulocytes, macrophages, eosinophils and erythrocytes. This Felis catus (Cat) protein is Granulocyte-macrophage colony-stimulating factor (CSF2).